The chain runs to 375 residues: E3 ubiquitin-protein ligase RNF34 (375 aa).

The FYVE-type zinc-finger motif lies at 56–107; that stretch reads EGPNIVCKACGLSFSVFRKKHVCCDCKKDFCSVCSVLQENLRRCSTCHLLQE. Residues 115–134 form the SAP 1 domain; sequence LMRLKVKDLRQYLILRNIPI. Serine 169 bears the Phosphoserine mark. The disordered stretch occupies residues 202-250; the sequence is RTLGSGALAQEPSEIASANTEDDEDDDDDDDDDDDDDEENLEDRTPGLT. Residues 221-242 show a composition bias toward acidic residues; that stretch reads TEDDEDDDDDDDDDDDDDEENL. A phosphoserine mark is found at serine 257 and serine 259. In terms of domain architecture, SAP 2 spans 267 to 281; that stretch reads VEGMSVRQLKEILAR. An RING-type zinc finger spans residues 328–363; the sequence is CRICMDAVIDCVLLECGHMVTCTKCGKRMSECPICR.

In terms of assembly, interacts with CASP8 and CASP10. Interacts with p53/TP53; involved in p53/TP53 ubiquitination. Interacts (via RING-type zinc finger) with MDM2; the interaction stabilizes MDM2. Interacts (via RING-type zinc finger) with PPARGC1A. Interacts with NOD1. In terms of processing, autoubiquitinated (in vitro). Proteolytically cleaved by caspases upon induction of apoptosis by TNF.

The protein resides in the cell membrane. It localises to the endomembrane system. It is found in the nucleus. The protein localises to the nucleus speckle. Its subcellular location is the cytoplasm. The protein resides in the cytosol. It catalyses the reaction S-ubiquitinyl-[E2 ubiquitin-conjugating enzyme]-L-cysteine + [acceptor protein]-L-lysine = [E2 ubiquitin-conjugating enzyme]-L-cysteine + N(6)-ubiquitinyl-[acceptor protein]-L-lysine.. It functions in the pathway protein modification; protein ubiquitination. In terms of biological role, E3 ubiquitin-protein ligase that regulates several biological processes through the ubiquitin-mediated proteasomal degradation of various target proteins. Ubiquitinates the caspases CASP8 and CASP10, promoting their proteasomal degradation, to negatively regulate cell death downstream of death domain receptors in the extrinsic pathway of apoptosis. May mediate 'Lys-48'-linked polyubiquitination of RIPK1 and its subsequent proteasomal degradation thereby indirectly regulating the tumor necrosis factor-mediated signaling pathway. Negatively regulates p53/TP53 through its direct ubiquitination and targeting to proteasomal degradation. Indirectly, may also negatively regulate p53/TP53 through ubiquitination and degradation of SFN. Mediates PPARGC1A proteasomal degradation probably through ubiquitination thereby indirectly regulating the metabolism of brown fat cells. Possibly involved in innate immunity, through 'Lys-48'-linked polyubiquitination of NOD1 and its subsequent proteasomal degradation. The protein is E3 ubiquitin-protein ligase RNF34 (RNF34) of Bos taurus (Bovine).